The following is a 968-amino-acid chain: RNA polymerase-associated protein RapA (968 aa).

The Helicase ATP-binding domain maps to 163–332 (EVGRRFAPRV…FARLRLLDPD (170 aa)). 176–183 (DEVGLGKT) provides a ligand contact to ATP. The DEAH box motif lies at 278-281 (DEAH). The region spanning 491 to 641 (RVDWLINFLK…AFEQTCPSGH (151 aa)) is the Helicase C-terminal domain.

Belongs to the SNF2/RAD54 helicase family. RapA subfamily. Interacts with the RNAP. Has a higher affinity for the core RNAP than for the holoenzyme. Its ATPase activity is stimulated by binding to RNAP.

Its function is as follows. Transcription regulator that activates transcription by stimulating RNA polymerase (RNAP) recycling in case of stress conditions such as supercoiled DNA or high salt concentrations. Probably acts by releasing the RNAP, when it is trapped or immobilized on tightly supercoiled DNA. Does not activate transcription on linear DNA. Probably not involved in DNA repair. This Shewanella sediminis (strain HAW-EB3) protein is RNA polymerase-associated protein RapA.